The primary structure comprises 246 residues: MTTGDCCHLPGSLCDCTDSATFLKSLEESDLGRPQYVTQVTAKDGQLLSTVIKALGTQSDGPICRICHEGGNGERLLSPCDCTGTLGTVHKTCLEKWLSSSNTSYCELCHTEFAVERRPRPVTEWLKDPGPRHEKRTLFCDMVCFLFITPLAAISGWLCLRGAQDHLQFNSRLEAVGLIALTIALFTIYVLWTLVSFRYHCQLYSEWRRTNQKVLLLIPDSKTATTIHHSFLSSKLLKFASDETTV.

Residues 56–116 (GTQSDGPICR…ELCHTEFAVE (61 aa)) form an RING-CH-type zinc finger. Zn(2+) is bound by residues Cys-64, Cys-67, Cys-80, Cys-82, His-90, Cys-93, Cys-106, and Cys-109. The next 2 helical transmembrane spans lie at 138 to 158 (LFCD…SGWL) and 175 to 195 (AVGL…WTLV).

Its subcellular location is the endoplasmic reticulum membrane. It is found in the lysosome membrane. It localises to the endosome membrane. The catalysed reaction is S-ubiquitinyl-[E2 ubiquitin-conjugating enzyme]-L-cysteine + [acceptor protein]-L-lysine = [E2 ubiquitin-conjugating enzyme]-L-cysteine + N(6)-ubiquitinyl-[acceptor protein]-L-lysine.. The protein operates within protein modification; protein ubiquitination. E3 ubiquitin-protein ligase which may be involved in endosomal trafficking. E3 ubiquitin ligases accept ubiquitin from an E2 ubiquitin-conjugating enzyme in the form of a thioester and then directly transfer the ubiquitin to targeted substrates. The sequence is that of E3 ubiquitin-protein ligase MARCHF2 (marchf2) from Xenopus laevis (African clawed frog).